Here is a 281-residue protein sequence, read N- to C-terminus: MEMO1 family protein PAE0818 (281 aa).

The protein belongs to the MEMO1 family.

The sequence is that of MEMO1 family protein PAE0818 from Pyrobaculum aerophilum (strain ATCC 51768 / DSM 7523 / JCM 9630 / CIP 104966 / NBRC 100827 / IM2).